Consider the following 423-residue polypeptide: Large ribosomal subunit protein mL37 (423 aa).

A mitochondrion-targeting transit peptide spans 1–29 (MALASGPAMRALAGSARLGLGGYGAPKRG).

The protein belongs to the mitochondrion-specific ribosomal protein mL37 family. In terms of assembly, component of the mitochondrial ribosome large subunit (39S) which comprises a 16S rRNA and about 50 distinct proteins.

Its subcellular location is the mitochondrion. The sequence is that of Large ribosomal subunit protein mL37 (Mrpl37) from Rattus norvegicus (Rat).